Here is a 329-residue protein sequence, read N- to C-terminus: GTP 3',8-cyclase (329 aa).

Residues 8–234 (AFARKFYYLR…QLRQRSDGPA (227 aa)) form the Radical SAM core domain. Arginine 17 provides a ligand contact to GTP. Positions 24 and 28 each coordinate [4Fe-4S] cluster. S-adenosyl-L-methionine is bound at residue tyrosine 30. Cysteine 31 contacts [4Fe-4S] cluster. Arginine 68 contributes to the GTP binding site. Residue glycine 72 participates in S-adenosyl-L-methionine binding. Residue threonine 99 coordinates GTP. Residue serine 123 coordinates S-adenosyl-L-methionine. Lysine 160 provides a ligand contact to GTP. S-adenosyl-L-methionine is bound at residue methionine 194. Positions 257 and 260 each coordinate [4Fe-4S] cluster. 262-264 (RLR) is a binding site for GTP. Cysteine 274 serves as a coordination point for [4Fe-4S] cluster.

This sequence belongs to the radical SAM superfamily. MoaA family. Monomer and homodimer. [4Fe-4S] cluster is required as a cofactor.

The catalysed reaction is GTP + AH2 + S-adenosyl-L-methionine = (8S)-3',8-cyclo-7,8-dihydroguanosine 5'-triphosphate + 5'-deoxyadenosine + L-methionine + A + H(+). The protein operates within cofactor biosynthesis; molybdopterin biosynthesis. Functionally, catalyzes the cyclization of GTP to (8S)-3',8-cyclo-7,8-dihydroguanosine 5'-triphosphate. The sequence is that of GTP 3',8-cyclase from Escherichia coli O139:H28 (strain E24377A / ETEC).